The following is a 228-amino-acid chain: Odorant-binding protein 47 (228 aa).

Disulfide bonds link Cys60–Cys225, Cys73–Cys215, Cys74–Cys204, Cys88–Cys114, Cys110–Cys185, and Cys158–Cys195. Asn117 is a glycosylation site (N-linked (GlcNAc...) asparagine).

The protein belongs to the PBP/GOBP family. Glycosylated. In terms of tissue distribution, head without antennae (at protein level).

Its subcellular location is the secreted. Present in the aqueous fluid surrounding olfactory sensory dendrites and are thought to aid in the capture and transport of hydrophobic odorants into and through this fluid. Binds N-phenyl-1-naphthylamine, menthol, citronellal, 1-dodecanol, decanal, p-tert-butylbenzophenone, 4-hydroxy-4'-isopropylazobenzene, 2-pyrrolyl-p-methyl-azobenzene and indole. Expressed in mosquito head but barely detectable in antennae, which suggests that it may be present in mouth structures, such as palpi and proboscis, and may have a function in taste. The sequence is that of Odorant-binding protein 47 from Anopheles gambiae (African malaria mosquito).